The following is a 97-amino-acid chain: YcgL domain-containing protein CKO_01183 (97 aa).

A YcgL domain is found at 1 to 85 (MFCVIYRSSK…PPEDLLKQHL (85 aa)). The tract at residues 74–97 (PPPPEDLLKQHLSAPGENKPDAKS) is disordered.

The chain is YcgL domain-containing protein CKO_01183 from Citrobacter koseri (strain ATCC BAA-895 / CDC 4225-83 / SGSC4696).